We begin with the raw amino-acid sequence, 365 residues long: Uroporphyrinogen decarboxylase (365 aa).

Substrate contacts are provided by residues 27–31, Asp-77, Tyr-154, Ser-209, and His-327; that span reads RQAGR.

This sequence belongs to the uroporphyrinogen decarboxylase family. As to quaternary structure, homodimer.

The protein localises to the cytoplasm. The enzyme catalyses uroporphyrinogen III + 4 H(+) = coproporphyrinogen III + 4 CO2. It participates in porphyrin-containing compound metabolism; protoporphyrin-IX biosynthesis; coproporphyrinogen-III from 5-aminolevulinate: step 4/4. Catalyzes the decarboxylation of four acetate groups of uroporphyrinogen-III to yield coproporphyrinogen-III. The chain is Uroporphyrinogen decarboxylase from Alkalilimnicola ehrlichii (strain ATCC BAA-1101 / DSM 17681 / MLHE-1).